The chain runs to 328 residues: Porphobilinogen deaminase (328 aa).

Position 245 is an S-(dipyrrolylmethanemethyl)cysteine (Cys-245).

Belongs to the HMBS family. As to quaternary structure, monomer. Requires dipyrromethane as cofactor.

It carries out the reaction 4 porphobilinogen + H2O = hydroxymethylbilane + 4 NH4(+). It functions in the pathway porphyrin-containing compound metabolism; protoporphyrin-IX biosynthesis; coproporphyrinogen-III from 5-aminolevulinate: step 2/4. It participates in porphyrin-containing compound metabolism; chlorophyll biosynthesis. Its function is as follows. Tetrapolymerization of the monopyrrole PBG into the hydroxymethylbilane pre-uroporphyrinogen in several discrete steps. The polypeptide is Porphobilinogen deaminase (Gloeobacter violaceus (strain ATCC 29082 / PCC 7421)).